Here is a 1182-residue protein sequence, read N- to C-terminus: uncharacterized protein (1182 aa).

Residues 618-638 (GSSSLVCSVMVVIFSIILYYL) traverse the membrane as a helical segment.

Its subcellular location is the host membrane. This is an uncharacterized protein from Callospermophilus lateralis (Golden-mantled ground squirrel).